An 818-amino-acid chain; its full sequence is SIT4-associating protein SAP4 (818 aa).

Disordered regions lie at residues 33-60 (ETSS…RDRS) and 499-526 (TSNT…KNIK). The span at 509-518 (NNDSNDSNDN) shows a compositional bias: low complexity.

It belongs to the SAPS family. Post-translationally, hyperphosphorylated in the absence of SIT4.

Functionally, associates with the SIT4 phosphatase in a cell cycle dependent manner. May be directly or indirectly involved in SIT4-dependent functions in budding and in normal G1 cyclin expression. In Saccharomyces cerevisiae (strain ATCC 204508 / S288c) (Baker's yeast), this protein is SIT4-associating protein SAP4 (SAP4).